Here is a 194-residue protein sequence, read N- to C-terminus: Peptidyl-tRNA hydrolase (194 aa).

H22 (proton acceptor) is an active-site residue. Residues Y67, N69, and N115 each contribute to the tRNA site.

This sequence belongs to the PTH family. Monomer.

The protein localises to the cytoplasm. It carries out the reaction an N-acyl-L-alpha-aminoacyl-tRNA + H2O = an N-acyl-L-amino acid + a tRNA + H(+). Hydrolyzes ribosome-free peptidyl-tRNAs (with 1 or more amino acids incorporated), which drop off the ribosome during protein synthesis, or as a result of ribosome stalling. Functionally, catalyzes the release of premature peptidyl moieties from peptidyl-tRNA molecules trapped in stalled 50S ribosomal subunits, and thus maintains levels of free tRNAs and 50S ribosomes. The protein is Peptidyl-tRNA hydrolase of Granulibacter bethesdensis (strain ATCC BAA-1260 / CGDNIH1).